We begin with the raw amino-acid sequence, 340 residues long: Alpha-1,4-N-acetylglucosaminyltransferase (340 aa).

Topologically, residues 1–4 (MRKE) are cytoplasmic. Residues 5 to 25 (LQLSLSVTLLLVCGFLYQFTL) form a helical; Signal-anchor for type II membrane protein membrane-spanning segment. The Lumenal portion of the chain corresponds to 26-340 (KSSCLFCLPS…VTGELGPGNK (315 aa)). N-linked (GlcNAc...) asparagine glycans are attached at residues Asn-99 and Asn-138. The DXD motif signature appears at 167–169 (DTD). N-linked (GlcNAc...) asparagine glycans are attached at residues Asn-251 and Asn-282.

It belongs to the glycosyltransferase 32 family. Detected in stomach and pancreas.

It is found in the golgi apparatus membrane. The protein operates within protein modification; protein glycosylation. Functionally, catalyzes the transfer of N-acetylglucosamine (GlcNAc) to core 2 branched O-glycans. Necessary for the synthesis of type III mucin which is specifically produced in the stomach, duodenum, and pancreatic duct. May protect against inflammation-associated gastric adenocarcinomas. This Homo sapiens (Human) protein is Alpha-1,4-N-acetylglucosaminyltransferase (A4GNT).